A 579-amino-acid polypeptide reads, in one-letter code: General transcriptional corepressor tupA (579 aa).

Positions Asn83–Ser101 are enriched in polar residues. The interval Asn83 to Trp258 is disordered. 3 stretches are compositionally biased toward low complexity: residues Asn109–Asn128, Gln157–Leu198, and Met207–Asn224. A compositionally biased stretch (basic and acidic residues) spans Lys227–Thr256. WD repeat units lie at residues Gln279 to Val319, Asp325 to Thr364, Gly367 to Thr406, Gly413 to Arg452, Gly455 to Arg494, Gly501 to Met540, and Gly543 to Ser579.

It belongs to the WD repeat TUP1 family. Associates with trfA to form the trfA-tupA corepressor complex.

Its subcellular location is the nucleus. Its function is as follows. Acts as a component of the trfA-tupA corepressor complex which is involved in the repression of many genes in a wide variety of physiological processes. May also be involved in the derepression of at least some target genes. The complex is recruited to target genes by interaction with DNA-bound transcriptional repressors. The complex recruits histone deacetylases to produce a repressive chromatin structure, interacts with hypoacetylated N-terminal tails of histones H3 and H4 that have been programmed for repression by the action of histone deacetylases and interferes directly with the transcriptional machinery by associating with the RNA polymerase II mediator complex. In Dictyostelium discoideum (Social amoeba), this protein is General transcriptional corepressor tupA (tupA).